The chain runs to 151 residues: Small heat shock protein HspH (151 aa).

Positions 28-138 constitute a sHSP domain; that stretch reads RAGEDNYPPY…KPRRIAINAA (111 aa).

It belongs to the small heat shock protein (HSP20) family.

The chain is Small heat shock protein HspH (hspH) from Bradyrhizobium diazoefficiens (strain JCM 10833 / BCRC 13528 / IAM 13628 / NBRC 14792 / USDA 110).